Consider the following 616-residue polypeptide: Pyrophosphate--fructose 6-phosphate 1-phosphotransferase subunit alpha (616 aa).

It belongs to the phosphofructokinase type A (PFKA) family. PPi-dependent PFK group II subfamily. Clade 'Long' sub-subfamily. As to quaternary structure, tetramer of two alpha (regulatory) and two beta (catalytic) chains.

Its subcellular location is the cytoplasm. It participates in carbohydrate degradation; glycolysis; D-glyceraldehyde 3-phosphate and glycerone phosphate from D-glucose: step 3/4. With respect to regulation, allosterically activated by fructose 2,6-bisphosphate. In terms of biological role, regulatory subunit of pyrophosphate--fructose 6-phosphate 1-phosphotransferase. This chain is Pyrophosphate--fructose 6-phosphate 1-phosphotransferase subunit alpha, found in Solanum tuberosum (Potato).